A 246-amino-acid chain; its full sequence is Enolase-phosphatase E1 (246 aa).

Positions 11 and 13 each coordinate Mg(2+). Substrate contacts are provided by residues 140–141 (SS) and lysine 174. Aspartate 199 contacts Mg(2+).

Belongs to the HAD-like hydrolase superfamily. MasA/MtnC family. As to quaternary structure, monomer. The cofactor is Mg(2+).

The protein localises to the cytoplasm. It is found in the nucleus. The enzyme catalyses 5-methylsulfanyl-2,3-dioxopentyl phosphate + H2O = 1,2-dihydroxy-5-(methylsulfanyl)pent-1-en-3-one + phosphate. Its pathway is amino-acid biosynthesis; L-methionine biosynthesis via salvage pathway; L-methionine from S-methyl-5-thio-alpha-D-ribose 1-phosphate: step 3/6. It functions in the pathway amino-acid biosynthesis; L-methionine biosynthesis via salvage pathway; L-methionine from S-methyl-5-thio-alpha-D-ribose 1-phosphate: step 4/6. Its function is as follows. Bifunctional enzyme that catalyzes the enolization of 2,3-diketo-5-methylthiopentyl-1-phosphate (DK-MTP-1-P) into the intermediate 2-hydroxy-3-keto-5-methylthiopentenyl-1-phosphate (HK-MTPenyl-1-P), which is then dephosphorylated to form the acireductone 1,2-dihydroxy-3-keto-5-methylthiopentene (DHK-MTPene). This is Enolase-phosphatase E1 from Acyrthosiphon pisum (Pea aphid).